The following is a 543-amino-acid chain: Chaperonin GroEL (543 aa).

ATP contacts are provided by residues 29–32, 86–90, G413, 476–478, and D492; these read TLGP, DGTTT, and NAA.

It belongs to the chaperonin (HSP60) family. In terms of assembly, forms a cylinder of 14 subunits composed of two heptameric rings stacked back-to-back. Interacts with the co-chaperonin GroES.

The protein localises to the cytoplasm. It carries out the reaction ATP + H2O + a folded polypeptide = ADP + phosphate + an unfolded polypeptide.. In terms of biological role, together with its co-chaperonin GroES, plays an essential role in assisting protein folding. The GroEL-GroES system forms a nano-cage that allows encapsulation of the non-native substrate proteins and provides a physical environment optimized to promote and accelerate protein folding. The polypeptide is Chaperonin GroEL (Streptococcus pyogenes serotype M49 (strain NZ131)).